A 704-amino-acid chain; its full sequence is Elongation factor G (704 aa).

Residues 8-290 enclose the tr-type G domain; the sequence is ARYRNIGISA…AVIEYLPAPT (283 aa). Residues 17 to 24, 88 to 92, and 142 to 145 contribute to the GTP site; these read AHIDAGKT, DTPGH, and NKMD.

It belongs to the TRAFAC class translation factor GTPase superfamily. Classic translation factor GTPase family. EF-G/EF-2 subfamily.

It is found in the cytoplasm. Catalyzes the GTP-dependent ribosomal translocation step during translation elongation. During this step, the ribosome changes from the pre-translocational (PRE) to the post-translocational (POST) state as the newly formed A-site-bound peptidyl-tRNA and P-site-bound deacylated tRNA move to the P and E sites, respectively. Catalyzes the coordinated movement of the two tRNA molecules, the mRNA and conformational changes in the ribosome. This chain is Elongation factor G, found in Proteus mirabilis (strain HI4320).